A 305-amino-acid chain; its full sequence is Tyrosine recombinase XerC (305 aa).

One can recognise a Core-binding (CB) domain in the interval 4 to 95 (ISIQELIKQW…TVKNFYKFLE (92 aa)). The Tyr recombinase domain occupies 116 to 298 (LLPKALSVDD…SIKHLEAVYN (183 aa)). Active-site residues include R159, K182, H250, R253, and H276. Y285 serves as the catalytic O-(3'-phospho-DNA)-tyrosine intermediate.

It belongs to the 'phage' integrase family. XerC subfamily. In terms of assembly, forms a cyclic heterotetrameric complex composed of two molecules of XerC and two molecules of XerD.

The protein resides in the cytoplasm. In terms of biological role, site-specific tyrosine recombinase, which acts by catalyzing the cutting and rejoining of the recombining DNA molecules. The XerC-XerD complex is essential to convert dimers of the bacterial chromosome into monomers to permit their segregation at cell division. It also contributes to the segregational stability of plasmids. The sequence is that of Tyrosine recombinase XerC from Rickettsia typhi (strain ATCC VR-144 / Wilmington).